The chain runs to 384 residues: S-adenosylmethionine synthase (384 aa).

H15 provides a ligand contact to ATP. D17 lines the Mg(2+) pocket. E43 is a binding site for K(+). Positions 56 and 99 each coordinate L-methionine. Residues 99 to 109 (QSPDINQGVDR) are flexible loop. Residues 164–166 (DAK), 230–231 (RF), D239, 245–246 (RK), A262, and K266 contribute to the ATP site. D239 is an L-methionine binding site. K270 lines the L-methionine pocket.

Belongs to the AdoMet synthase family. As to quaternary structure, homotetramer; dimer of dimers. Requires Mg(2+) as cofactor. K(+) serves as cofactor.

The protein localises to the cytoplasm. It catalyses the reaction L-methionine + ATP + H2O = S-adenosyl-L-methionine + phosphate + diphosphate. The protein operates within amino-acid biosynthesis; S-adenosyl-L-methionine biosynthesis; S-adenosyl-L-methionine from L-methionine: step 1/1. Its function is as follows. Catalyzes the formation of S-adenosylmethionine (AdoMet) from methionine and ATP. The overall synthetic reaction is composed of two sequential steps, AdoMet formation and the subsequent tripolyphosphate hydrolysis which occurs prior to release of AdoMet from the enzyme. In Edwardsiella ictaluri (strain 93-146), this protein is S-adenosylmethionine synthase.